The chain runs to 304 residues: MFMTESRLTHLKQLEAESIHIIREVAAEFENPVMLYSIGKDSAVMLHLALKAFYPAKLPFPLLHVDTGWKFKDMIAFRDNMAKTHGFDLIVHQNKEGREAGINPFDHGSSKYTDIMKTQALKQALDKYQFDAAFGGARRDEEKSRAKERVYSFRDSKHRWDPKNQRPELWNLYNGKVNKGESIRVFPLSNWTELDIWQYIYLENIQIVPLYFSAVRPVVERSGTLIMVDDERMRLKEGEVPQMKSVRFRTLGCYPLTGAVESEADTLPEIIQEMLLATSSERQGRMIDHDEAGSMEKKKQEGYF.

Belongs to the PAPS reductase family. CysD subfamily. In terms of assembly, heterodimer composed of CysD, the smaller subunit, and CysN.

The catalysed reaction is sulfate + ATP + H(+) = adenosine 5'-phosphosulfate + diphosphate. It participates in sulfur metabolism; hydrogen sulfide biosynthesis; sulfite from sulfate: step 1/3. With CysN forms the ATP sulfurylase (ATPS) that catalyzes the adenylation of sulfate producing adenosine 5'-phosphosulfate (APS) and diphosphate, the first enzymatic step in sulfur assimilation pathway. APS synthesis involves the formation of a high-energy phosphoric-sulfuric acid anhydride bond driven by GTP hydrolysis by CysN coupled to ATP hydrolysis by CysD. In Acinetobacter baumannii (strain SDF), this protein is Sulfate adenylyltransferase subunit 2.